The chain runs to 152 residues: Superoxide dismutase [Cu-Zn] 5 (152 aa).

Cu cation contacts are provided by His44, His46, and His61. Cys55 and Cys144 form a disulfide bridge. Zn(2+) is bound by residues His61, His69, His78, and Asp81. His118 contributes to the Cu cation binding site.

This sequence belongs to the Cu-Zn superoxide dismutase family. Cu cation is required as a cofactor. The cofactor is Zn(2+).

The enzyme catalyses 2 superoxide + 2 H(+) = H2O2 + O2. Functionally, destroys radicals which are normally produced within the cells and which are toxic to biological systems. This is Superoxide dismutase [Cu-Zn] 5 (sodE) from Dictyostelium discoideum (Social amoeba).